The primary structure comprises 434 residues: Histidinol dehydrogenase (434 aa).

Tyr130, Gln191, and Asn214 together coordinate NAD(+). Positions 237, 259, and 262 each coordinate substrate. Gln259 and His262 together coordinate Zn(2+). Residues Glu327 and His328 each act as proton acceptor in the active site. Positions 328, 361, 415, and 420 each coordinate substrate. Asp361 is a Zn(2+) binding site. Zn(2+) is bound at residue His420.

Belongs to the histidinol dehydrogenase family. Requires Zn(2+) as cofactor.

It carries out the reaction L-histidinol + 2 NAD(+) + H2O = L-histidine + 2 NADH + 3 H(+). It participates in amino-acid biosynthesis; L-histidine biosynthesis; L-histidine from 5-phospho-alpha-D-ribose 1-diphosphate: step 9/9. In terms of biological role, catalyzes the sequential NAD-dependent oxidations of L-histidinol to L-histidinaldehyde and then to L-histidine. The chain is Histidinol dehydrogenase from Rhizobium meliloti (strain 1021) (Ensifer meliloti).